The primary structure comprises 253 residues: Snake venom serine proteinase 14 (253 aa).

The signal sequence occupies residues 1 to 18 (MVLIRVLANLLILQLSYA). Positions 19 to 24 (QKSSEL) are excised as a propeptide. The Peptidase S1 domain occupies 25–244 (VIGGDECNIN…YTDWIQSIIA (220 aa)). 6 disulfide bridges follow: C31–C158, C49–C65, C93–C251, C137–C205, C169–C184, and C195–C220. Active-site charge relay system residues include H64 and D105. N-linked (GlcNAc...) asparagine glycans are attached at residues N116, N117, and N149. S199 functions as the Charge relay system in the catalytic mechanism.

It belongs to the peptidase S1 family. Snake venom subfamily. As to quaternary structure, monomer. In terms of tissue distribution, expressed by the venom gland.

The protein resides in the secreted. Functionally, snake venom serine protease that may act in the hemostasis system of the prey. The polypeptide is Snake venom serine proteinase 14 (Crotalus adamanteus (Eastern diamondback rattlesnake)).